A 293-amino-acid polypeptide reads, in one-letter code: Protease HtpX (293 aa).

The next 2 helical transmembrane spans lie at 4-24 and 38-58; these read IGLF…VLSL and LTNL…ISLF. His145 is a Zn(2+) binding site. Glu146 is an active-site residue. His149 is a Zn(2+) binding site. 2 helical membrane passes run 156–176 and 193–213; these read ITLS…ARII and IAFF…ASMI. Glu222 is a Zn(2+) binding site.

This sequence belongs to the peptidase M48B family. Zn(2+) is required as a cofactor.

The protein localises to the cell inner membrane. This Cellvibrio japonicus (strain Ueda107) (Pseudomonas fluorescens subsp. cellulosa) protein is Protease HtpX.